An 820-amino-acid chain; its full sequence is Phenylalanine--tRNA ligase beta subunit (820 aa).

A tRNA-binding domain is found at lysine 42–lysine 154. The B5 domain maps to proline 413–isoleucine 489. Mg(2+)-binding residues include aspartate 467, aspartate 473, glutamate 476, and aspartate 477. The region spanning serine 727 to arginine 820 is the FDX-ACB domain.

The protein belongs to the phenylalanyl-tRNA synthetase beta subunit family. Type 1 subfamily. As to quaternary structure, tetramer of two alpha and two beta subunits. It depends on Mg(2+) as a cofactor.

It is found in the cytoplasm. It carries out the reaction tRNA(Phe) + L-phenylalanine + ATP = L-phenylalanyl-tRNA(Phe) + AMP + diphosphate + H(+). This is Phenylalanine--tRNA ligase beta subunit from Bacteroides thetaiotaomicron (strain ATCC 29148 / DSM 2079 / JCM 5827 / CCUG 10774 / NCTC 10582 / VPI-5482 / E50).